The primary structure comprises 212 residues: tRNA(Phe) 7-((3-amino-3-carboxypropyl)-4-demethylwyosine(37)-N(4))-methyltransferase 2 (212 aa).

This sequence belongs to the TYW3 family.

The catalysed reaction is 4-demethyl-7-[(3S)-3-amino-3-carboxypropyl]wyosine(37) in tRNA(Phe) + S-adenosyl-L-methionine = 7-[(3S)-3-amino-3-carboxypropyl]wyosine(37) in tRNA(Phe) + S-adenosyl-L-homocysteine + H(+). Functionally, S-adenosyl-L-methionine-dependent methyltransferase that acts as a component of the wyosine derivatives biosynthesis pathway. Probably methylates N-4 position of wybutosine-86 to produce wybutosine-72. The sequence is that of tRNA(Phe) 7-((3-amino-3-carboxypropyl)-4-demethylwyosine(37)-N(4))-methyltransferase 2 from Thermococcus kodakarensis (strain ATCC BAA-918 / JCM 12380 / KOD1) (Pyrococcus kodakaraensis (strain KOD1)).